A 536-amino-acid polypeptide reads, in one-letter code: Prolyl 3-hydroxylase sudestada1 (536 aa).

The interval 1–35 is disordered; sequence METSSSSPVKPRRKDKDEDGRAEQEDSADQVGEPH. Basic and acidic residues predominate over residues 14–24; that stretch reads KDKDEDGRAEQ. Residues 165–275 enclose the Fe2OG dioxygenase domain; that stretch reads KLDYVSASCS…RLTINGWFHG (111 aa). Positions 185 and 187 each coordinate Fe cation. Residue Y199 participates in 2-oxoglutarate binding. H254 contacts Fe cation. 2-oxoglutarate is bound at residue R266. The interval 467-486 is disordered; that stretch reads PTAKAPTDGRRSDYDDEEED.

It belongs to the TPA1 family. Monomer. Requires Fe(2+) as cofactor. L-ascorbate serves as cofactor. As to expression, in third-instar larval tissues,highly expressed in the fat body, with significant expression in other organs including the brain, salivary glands, imaginal disks and gut.

It is found in the nucleus. The protein localises to the cytoplasm. The catalysed reaction is [ribosomal protein uS12]-L-proline + 2-oxoglutarate + O2 = [ribosomal protein uS12]-(3S)-3-hydroxy-L-proline + succinate + CO2. Prolyl 3-hydroxylase that catalyzes 3-hydroxylation of 'Pro-62' of small ribosomal subunit uS12 (RpS23), thereby regulating protein translation termination efficiency. The polypeptide is Prolyl 3-hydroxylase sudestada1 (sud1) (Drosophila melanogaster (Fruit fly)).